Consider the following 164-residue polypeptide: UPF0225 protein Shewmr7_1921 (164 aa).

Belongs to the UPF0225 family.

This is UPF0225 protein Shewmr7_1921 from Shewanella sp. (strain MR-7).